Consider the following 506-residue polypeptide: Histidine ammonia-lyase (506 aa).

Residues 143–145 (ASG) constitute a cross-link (5-imidazolinone (Ala-Gly)). The residue at position 144 (Ser-144) is a 2,3-didehydroalanine (Ser).

The protein belongs to the PAL/histidase family. In terms of processing, contains an active site 4-methylidene-imidazol-5-one (MIO), which is formed autocatalytically by cyclization and dehydration of residues Ala-Ser-Gly.

The protein localises to the cytoplasm. The catalysed reaction is L-histidine = trans-urocanate + NH4(+). It participates in amino-acid degradation; L-histidine degradation into L-glutamate; N-formimidoyl-L-glutamate from L-histidine: step 1/3. The polypeptide is Histidine ammonia-lyase (Enterobacter sp. (strain 638)).